Reading from the N-terminus, the 420-residue chain is UDP-N-acetylglucosamine 1-carboxyvinyltransferase (420 aa).

Position 22 to 23 (22 to 23 (KN)) interacts with phosphoenolpyruvate. Residue Arg94 participates in UDP-N-acetyl-alpha-D-glucosamine binding. The Proton donor role is filled by Cys118. Cys118 carries the 2-(S-cysteinyl)pyruvic acid O-phosphothioketal modification. Residues Asp306 and Ile328 each coordinate UDP-N-acetyl-alpha-D-glucosamine.

This sequence belongs to the EPSP synthase family. MurA subfamily.

The protein localises to the cytoplasm. It carries out the reaction phosphoenolpyruvate + UDP-N-acetyl-alpha-D-glucosamine = UDP-N-acetyl-3-O-(1-carboxyvinyl)-alpha-D-glucosamine + phosphate. It functions in the pathway cell wall biogenesis; peptidoglycan biosynthesis. Cell wall formation. Adds enolpyruvyl to UDP-N-acetylglucosamine. The chain is UDP-N-acetylglucosamine 1-carboxyvinyltransferase from Jannaschia sp. (strain CCS1).